We begin with the raw amino-acid sequence, 207 residues long: Dephospho-CoA kinase (207 aa).

Residues 5–207 (IVGLTGGIAS…AALQTHRIEN (203 aa)) enclose the DPCK domain. 13–18 (ASGKSA) contacts ATP.

This sequence belongs to the CoaE family.

The protein localises to the cytoplasm. The catalysed reaction is 3'-dephospho-CoA + ATP = ADP + CoA + H(+). Its pathway is cofactor biosynthesis; coenzyme A biosynthesis; CoA from (R)-pantothenate: step 5/5. Catalyzes the phosphorylation of the 3'-hydroxyl group of dephosphocoenzyme A to form coenzyme A. This chain is Dephospho-CoA kinase, found in Xanthomonas campestris pv. campestris (strain ATCC 33913 / DSM 3586 / NCPPB 528 / LMG 568 / P 25).